We begin with the raw amino-acid sequence, 211 residues long: LexA repressor (211 aa).

Residues 27 to 47 constitute a DNA-binding region (H-T-H motif); it reads QTEIARAFGFKGVRAVQHHLD. Residues serine 131 and lysine 168 each act as for autocatalytic cleavage activity in the active site.

This sequence belongs to the peptidase S24 family. Homodimer.

The enzyme catalyses Hydrolysis of Ala-|-Gly bond in repressor LexA.. In terms of biological role, represses a number of genes involved in the response to DNA damage (SOS response), including recA and lexA. In the presence of single-stranded DNA, RecA interacts with LexA causing an autocatalytic cleavage which disrupts the DNA-binding part of LexA, leading to derepression of the SOS regulon and eventually DNA repair. This is LexA repressor from Xylella fastidiosa (strain M12).